The following is a 265-amino-acid chain: Hydroxyethylthiazole kinase (265 aa).

Position 50 (M50) interacts with substrate. The ATP site is built by R125 and T171. Residue G198 participates in substrate binding.

It belongs to the Thz kinase family. Requires Mg(2+) as cofactor.

The catalysed reaction is 5-(2-hydroxyethyl)-4-methylthiazole + ATP = 4-methyl-5-(2-phosphooxyethyl)-thiazole + ADP + H(+). Its pathway is cofactor biosynthesis; thiamine diphosphate biosynthesis; 4-methyl-5-(2-phosphoethyl)-thiazole from 5-(2-hydroxyethyl)-4-methylthiazole: step 1/1. Its function is as follows. Catalyzes the phosphorylation of the hydroxyl group of 4-methyl-5-beta-hydroxyethylthiazole (THZ). This is Hydroxyethylthiazole kinase from Salmonella choleraesuis (strain SC-B67).